A 380-amino-acid polypeptide reads, in one-letter code: Heme A synthase (380 aa).

A run of 8 helical transmembrane segments spans residues 36–56, 125–145, 151–171, 187–207, 227–247, 287–307, 320–340, and 344–364; these read IRAW…VGGL, VIGL…KIPA, LILP…MVAS, LATH…SILQ, FGLA…GALV, LVQF…VMVW, FAFN…IVTV, and APWQ…VLIL. H292 is a binding site for heme. Position 352 (H352) interacts with heme.

Belongs to the COX15/CtaA family. Type 2 subfamily. In terms of assembly, interacts with CtaB. Heme b serves as cofactor.

Its subcellular location is the cell membrane. The catalysed reaction is Fe(II)-heme o + 2 A + H2O = Fe(II)-heme a + 2 AH2. Its pathway is porphyrin-containing compound metabolism; heme A biosynthesis; heme A from heme O: step 1/1. Catalyzes the conversion of heme O to heme A by two successive hydroxylations of the methyl group at C8. The first hydroxylation forms heme I, the second hydroxylation results in an unstable dihydroxymethyl group, which spontaneously dehydrates, resulting in the formyl group of heme A. The polypeptide is Heme A synthase (Ruegeria pomeroyi (strain ATCC 700808 / DSM 15171 / DSS-3) (Silicibacter pomeroyi)).